Consider the following 138-residue polypeptide: Large ribosomal subunit protein uL16 (138 aa).

Basic residues predominate over residues 1-17; it reads MLIPRRVKHRKQHHPTR. Positions 1-24 are disordered; sequence MLIPRRVKHRKQHHPTRRGAASGG.

This sequence belongs to the universal ribosomal protein uL16 family. In terms of assembly, part of the 50S ribosomal subunit.

Binds 23S rRNA and is also seen to make contacts with the A and possibly P site tRNAs. The protein is Large ribosomal subunit protein uL16 of Kineococcus radiotolerans (strain ATCC BAA-149 / DSM 14245 / SRS30216).